The chain runs to 255 residues: U2 small nuclear ribonucleoprotein A' (255 aa).

4 LRR repeats span residues 20-41 (RDRELDLRGYKIPVIENLGATL), 43-64 (QFDAIDFSDNEIRKLDGFPLLR), 65-86 (RLKTLLVNNNRICRIGEGLDQA), and 89-110 (CLTELILTNNSLVELGDLDPLA). Residues 123-161 (NPVTNKKHYRLYVIYKVPQVRVLDFQKVKLKERQEAEKM) enclose the LRRCT domain. Lysine 172 bears the N6-acetyllysine; alternate mark. Residue lysine 172 forms a Glycyl lysine isopeptide (Lys-Gly) (interchain with G-Cter in SUMO2); alternate linkage. Residues 174–201 (IARRSKTFNPGAGLPTDKKKGGPSPGDV) are disordered. Phosphoserine is present on residues serine 178 and serine 197. Lysine 221 participates in a covalent cross-link: Glycyl lysine isopeptide (Lys-Gly) (interchain with G-Cter in SUMO2). A disordered region spans residues 222–255 (GLLQSGQIPGRERRSGPTDDGEEEMEEDTVTNGS). Serine 236 and serine 255 each carry phosphoserine. The segment covering 240-255 (DDGEEEMEEDTVTNGS) has biased composition (acidic residues).

The protein belongs to the U2 small nuclear ribonucleoprotein A family. Identified in the spliceosome B complex. Identified in the spliceosome C complex. Found in a pre-mRNA splicing complex with SFRS4, SFRS5, SNRNP70, SNRPA1, SRRM1 and SRRM2. Found in a pre-mRNA exonic splicing enhancer (ESE) complex with SNRNP70, SNRPA1, SRRM1 and TRA2B. Contributes to the binding of stem loop IV of U2 snRNA with SNRPB2.

The protein localises to the nucleus. Involved in pre-mRNA splicing as component of the spliceosome. Associated with sn-RNP U2, where it contributes to the binding of stem loop IV of U2 snRNA. In Homo sapiens (Human), this protein is U2 small nuclear ribonucleoprotein A' (SNRPA1).